We begin with the raw amino-acid sequence, 447 residues long: N-succinylarginine dihydrolase (447 aa).

Substrate contacts are provided by residues 19–28 (AGLSFGNEAS), Asn-110, and 137–138 (HR). The active site involves Glu-174. Arg-212 serves as a coordination point for substrate. His-248 is an active-site residue. Positions 250 and 359 each coordinate substrate. The Nucleophile role is filled by Cys-365.

The protein belongs to the succinylarginine dihydrolase family. In terms of assembly, homodimer.

The catalysed reaction is N(2)-succinyl-L-arginine + 2 H2O + 2 H(+) = N(2)-succinyl-L-ornithine + 2 NH4(+) + CO2. The protein operates within amino-acid degradation; L-arginine degradation via AST pathway; L-glutamate and succinate from L-arginine: step 2/5. Functionally, catalyzes the hydrolysis of N(2)-succinylarginine into N(2)-succinylornithine, ammonia and CO(2). The chain is N-succinylarginine dihydrolase from Salmonella paratyphi B (strain ATCC BAA-1250 / SPB7).